The following is a 365-amino-acid chain: Ribosome biogenesis regulatory protein homolog (365 aa).

Residue methionine 1 is modified to N-acetylmethionine. Serine 5 carries the phosphoserine modification. Glycyl lysine isopeptide (Lys-Gly) (interchain with G-Cter in SUMO2) cross-links involve residues lysine 154 and lysine 226. Positions 233 to 253 are disordered; sequence GRFQERLPKEKVPRGSGKKRK. A compositionally biased stretch (basic and acidic residues) spans 235 to 245; that stretch reads FQERLPKEKVP. A Glycyl lysine isopeptide (Lys-Gly) (interchain with G-Cter in SUMO2) cross-link involves residue lysine 266. The residue at position 273 (arginine 273) is a Citrulline. Residues 280–365 form a disordered region; that stretch reads PQLDVTRATN…GQRPGGKRRK (86 aa). A compositionally biased stretch (basic residues) spans 302–325; sequence KRRKMSQKGKRKGGRQGPGGKRKG. The span at 337–350 shows a compositional bias: gly residues; the sequence is GLGGKMNSGPPGLG. The span at 351 to 365 shows a compositional bias: basic residues; it reads GKRKGGQRPGGKRRK.

This sequence belongs to the RRS1 family. Component of a hexameric 5S RNP precursor complex, composed of 5S RNA, RRS1, RPF2/BXDC1, RPL5, RPL11 and HEATR3; this complex acts as a precursor for ribosome assembly. In terms of processing, citrullinated by PADI4.

The protein localises to the nucleus. It localises to the nucleolus. Its function is as follows. Involved in ribosomal large subunit assembly. May regulate the localization of the 5S RNP/5S ribonucleoprotein particle to the nucleolus. The chain is Ribosome biogenesis regulatory protein homolog (RRS1) from Homo sapiens (Human).